Here is a 174-residue protein sequence, read N- to C-terminus: ATP-dependent protease subunit HslV (174 aa).

T2 is an active-site residue. Na(+) is bound by residues G159, D162, and T165.

It belongs to the peptidase T1B family. HslV subfamily. A double ring-shaped homohexamer of HslV is capped on each side by a ring-shaped HslU homohexamer. The assembly of the HslU/HslV complex is dependent on binding of ATP.

It localises to the cytoplasm. The enzyme catalyses ATP-dependent cleavage of peptide bonds with broad specificity.. With respect to regulation, allosterically activated by HslU binding. Its function is as follows. Protease subunit of a proteasome-like degradation complex believed to be a general protein degrading machinery. The protein is ATP-dependent protease subunit HslV of Lacticaseibacillus casei (strain BL23) (Lactobacillus casei).